A 609-amino-acid chain; its full sequence is Putative 4-coumarate--CoA ligase-like 8 (609 aa).

Positions 194, 195, 196, 197, 198, and 202 each coordinate ATP. Positions 252 and 256 each coordinate (E)-4-coumaroyl-AMP. Arg-274 provides a ligand contact to CoA. The SBD1 stretch occupies residues 276–348; it reads SVEKTMAAVE…SCFPAVNLGQ (73 aa). Residues Gly-326, Gln-348, Thr-353, and Met-361 each contribute to the (E)-4-coumaroyl-AMP site. 2 residues coordinate ATP: Gln-348 and Thr-353. The interval 349-450 is SBD2; sequence CYGLTETTGI…VRGPSTMRGY (102 aa). ATP contacts are provided by Asp-482 and Arg-497. Residues Lys-499 and Lys-503 each coordinate (E)-4-coumaroyl-AMP. Ala-506 lines the CoA pocket. Residue Lys-589 participates in ATP binding.

It belongs to the ATP-dependent AMP-binding enzyme family. Mg(2+) is required as a cofactor.

It carries out the reaction (E)-4-coumarate + ATP + CoA = (E)-4-coumaroyl-CoA + AMP + diphosphate. It catalyses the reaction (E)-4-coumarate + ATP + H(+) = (E)-4-coumaroyl-AMP + diphosphate. The enzyme catalyses (E)-4-coumaroyl-AMP + CoA = (E)-4-coumaroyl-CoA + AMP + H(+). Functionally, carboxylate--CoA ligase that may use 4-coumarate as substrate. Follows a two-step reaction mechanism, wherein the carboxylate substrate first undergoes adenylation by ATP, followed by a thioesterification in the presence of CoA to yield the final CoA thioester. This chain is Putative 4-coumarate--CoA ligase-like 8 (4CLL8), found in Oryza sativa subsp. japonica (Rice).